The primary structure comprises 407 residues: Probable tRNA sulfurtransferase (407 aa).

The THUMP domain occupies 61–165 (NEIIQRLSKV…MDAIYIYEKV (105 aa)). ATP-binding positions include 183-184 (ML), 208-209 (HF), Arg265, Gly287, and Gln296.

Belongs to the ThiI family.

The protein resides in the cytoplasm. The enzyme catalyses [ThiI sulfur-carrier protein]-S-sulfanyl-L-cysteine + a uridine in tRNA + 2 reduced [2Fe-2S]-[ferredoxin] + ATP + H(+) = [ThiI sulfur-carrier protein]-L-cysteine + a 4-thiouridine in tRNA + 2 oxidized [2Fe-2S]-[ferredoxin] + AMP + diphosphate. The catalysed reaction is [ThiS sulfur-carrier protein]-C-terminal Gly-Gly-AMP + S-sulfanyl-L-cysteinyl-[cysteine desulfurase] + AH2 = [ThiS sulfur-carrier protein]-C-terminal-Gly-aminoethanethioate + L-cysteinyl-[cysteine desulfurase] + A + AMP + 2 H(+). It functions in the pathway cofactor biosynthesis; thiamine diphosphate biosynthesis. Catalyzes the ATP-dependent transfer of a sulfur to tRNA to produce 4-thiouridine in position 8 of tRNAs, which functions as a near-UV photosensor. Also catalyzes the transfer of sulfur to the sulfur carrier protein ThiS, forming ThiS-thiocarboxylate. This is a step in the synthesis of thiazole, in the thiamine biosynthesis pathway. The sulfur is donated as persulfide by IscS. This Staphylococcus epidermidis (strain ATCC 35984 / DSM 28319 / BCRC 17069 / CCUG 31568 / BM 3577 / RP62A) protein is Probable tRNA sulfurtransferase.